The sequence spans 408 residues: (R)-2-hydroxyisocaproyl-CoA dehydratase alpha subunit (408 aa).

Substrate is bound at residue Glu55. [4Fe-4S] cluster is bound by residues Cys84, Cys117, and Cys346.

The protein belongs to the FldB/FldC dehydratase alpha/beta subunit family. In terms of assembly, part of the heterodimeric complex HadBC composed of (R)-2-hydroxyisocaproyl-CoA dehydratase alpha (HadB) and beta (HadC) subunit. [4Fe-4S] cluster serves as cofactor.

The enzyme catalyses (R)-2-hydroxy-4-methylpentanoyl-CoA = 4-methylpent-2-enoyl-CoA + H2O. Its activity is regulated as follows. Activated by HadI. In terms of biological role, involved in the reductive branch of L-leucine fermentation. Catalyzes the irreversible beta/alpha-elimination of water from (R)-2-hydroxyisocaproyl-CoA to yield isocaprenoyl-CoA. This beta/alpha-dehydration depends on the reductive formation of ketyl radicals on the substrate generated by injection of a single electron from the ATP-dependent activator protein HadI. The enzyme is specific for the R-isomer. This Clostridioides difficile (Peptoclostridium difficile) protein is (R)-2-hydroxyisocaproyl-CoA dehydratase alpha subunit.